The primary structure comprises 156 residues: ATP synthase subunit b (156 aa).

The chain crosses the membrane as a helical span at residues 11-31; it reads AIAFILFVAFCMKYVWPPLMA.

The protein belongs to the ATPase B chain family. F-type ATPases have 2 components, F(1) - the catalytic core - and F(0) - the membrane proton channel. F(1) has five subunits: alpha(3), beta(3), gamma(1), delta(1), epsilon(1). F(0) has three main subunits: a(1), b(2) and c(10-14). The alpha and beta chains form an alternating ring which encloses part of the gamma chain. F(1) is attached to F(0) by a central stalk formed by the gamma and epsilon chains, while a peripheral stalk is formed by the delta and b chains.

It is found in the cell inner membrane. F(1)F(0) ATP synthase produces ATP from ADP in the presence of a proton or sodium gradient. F-type ATPases consist of two structural domains, F(1) containing the extramembraneous catalytic core and F(0) containing the membrane proton channel, linked together by a central stalk and a peripheral stalk. During catalysis, ATP synthesis in the catalytic domain of F(1) is coupled via a rotary mechanism of the central stalk subunits to proton translocation. Its function is as follows. Component of the F(0) channel, it forms part of the peripheral stalk, linking F(1) to F(0). This Erwinia tasmaniensis (strain DSM 17950 / CFBP 7177 / CIP 109463 / NCPPB 4357 / Et1/99) protein is ATP synthase subunit b.